Here is a 336-residue protein sequence, read N- to C-terminus: Lipoyl synthase (336 aa).

[4Fe-4S] cluster contacts are provided by Cys-81, Cys-86, Cys-92, Cys-107, Cys-111, Cys-114, and Ser-323. In terms of domain architecture, Radical SAM core spans 93–312; sequence FGHGTATFMI…EDYGYELGFS (220 aa).

Belongs to the radical SAM superfamily. Lipoyl synthase family. The cofactor is [4Fe-4S] cluster.

Its subcellular location is the cytoplasm. It carries out the reaction [[Fe-S] cluster scaffold protein carrying a second [4Fe-4S](2+) cluster] + N(6)-octanoyl-L-lysyl-[protein] + 2 oxidized [2Fe-2S]-[ferredoxin] + 2 S-adenosyl-L-methionine + 4 H(+) = [[Fe-S] cluster scaffold protein] + N(6)-[(R)-dihydrolipoyl]-L-lysyl-[protein] + 4 Fe(3+) + 2 hydrogen sulfide + 2 5'-deoxyadenosine + 2 L-methionine + 2 reduced [2Fe-2S]-[ferredoxin]. It functions in the pathway protein modification; protein lipoylation via endogenous pathway; protein N(6)-(lipoyl)lysine from octanoyl-[acyl-carrier-protein]: step 2/2. In terms of biological role, catalyzes the radical-mediated insertion of two sulfur atoms into the C-6 and C-8 positions of the octanoyl moiety bound to the lipoyl domains of lipoate-dependent enzymes, thereby converting the octanoylated domains into lipoylated derivatives. The polypeptide is Lipoyl synthase (Stenotrophomonas maltophilia (strain R551-3)).